A 331-amino-acid polypeptide reads, in one-letter code: tRNA-dihydrouridine(20/20a) synthase (331 aa).

FMN contacts are provided by residues 18 to 20 (PML) and glutamine 70. The active-site Proton donor is the cysteine 100. Residues lysine 139, histidine 172, 212-214 (NGG), and 234-235 (GR) contribute to the FMN site.

It belongs to the Dus family. DusA subfamily. FMN is required as a cofactor.

The enzyme catalyses 5,6-dihydrouridine(20) in tRNA + NADP(+) = uridine(20) in tRNA + NADPH + H(+). It catalyses the reaction 5,6-dihydrouridine(20) in tRNA + NAD(+) = uridine(20) in tRNA + NADH + H(+). It carries out the reaction 5,6-dihydrouridine(20a) in tRNA + NADP(+) = uridine(20a) in tRNA + NADPH + H(+). The catalysed reaction is 5,6-dihydrouridine(20a) in tRNA + NAD(+) = uridine(20a) in tRNA + NADH + H(+). Functionally, catalyzes the synthesis of 5,6-dihydrouridine (D), a modified base found in the D-loop of most tRNAs, via the reduction of the C5-C6 double bond in target uridines. Specifically modifies U20 and U20a in tRNAs. The sequence is that of tRNA-dihydrouridine(20/20a) synthase from Escherichia coli O6:H1 (strain CFT073 / ATCC 700928 / UPEC).